The primary structure comprises 562 residues: DNA ligase (562 aa).

Glutamate 250 serves as a coordination point for ATP. The active-site N6-AMP-lysine intermediate is the lysine 252. Positions 257, 272, 302, 342, 417, and 423 each coordinate ATP.

It belongs to the ATP-dependent DNA ligase family. Requires Mg(2+) as cofactor. The cofactor is Zn(2+).

It catalyses the reaction ATP + (deoxyribonucleotide)n-3'-hydroxyl + 5'-phospho-(deoxyribonucleotide)m = (deoxyribonucleotide)n+m + AMP + diphosphate.. The enzyme catalyses NAD(+) + (deoxyribonucleotide)n-3'-hydroxyl + 5'-phospho-(deoxyribonucleotide)m = (deoxyribonucleotide)n+m + AMP + beta-nicotinamide D-nucleotide.. In terms of biological role, DNA ligase that seals nicks in double-stranded DNA during DNA replication, DNA recombination and DNA repair. Can use both ATP and NAD(+), but NAD(+) may be a preferred nucleotide cofactor. The protein is DNA ligase of Thermococcus onnurineus (strain NA1).